Consider the following 468-residue polypeptide: ATP synthase subunit beta (468 aa).

G155–T162 is a binding site for ATP.

Belongs to the ATPase alpha/beta chains family. In terms of assembly, F-type ATPases have 2 components, CF(1) - the catalytic core - and CF(0) - the membrane proton channel. CF(1) has five subunits: alpha(3), beta(3), gamma(1), delta(1), epsilon(1). CF(0) has three main subunits: a(1), b(2) and c(9-12). The alpha and beta chains form an alternating ring which encloses part of the gamma chain. CF(1) is attached to CF(0) by a central stalk formed by the gamma and epsilon chains, while a peripheral stalk is formed by the delta and b chains.

It is found in the cell membrane. The enzyme catalyses ATP + H2O + 4 H(+)(in) = ADP + phosphate + 5 H(+)(out). Functionally, produces ATP from ADP in the presence of a proton gradient across the membrane. The catalytic sites are hosted primarily by the beta subunits. The sequence is that of ATP synthase subunit beta from Streptococcus pyogenes serotype M6 (strain ATCC BAA-946 / MGAS10394).